The following is a 339-amino-acid chain: Probable protein phosphatase 2C 28 (339 aa).

In terms of domain architecture, PPM-type phosphatase spans 87-334 (DHGYHLVKGQ…DDISCVVVSF (248 aa)). Mn(2+) is bound by residues Asp124, Gly125, Asp286, and Asp325.

Belongs to the PP2C family. Mg(2+) serves as cofactor. Mn(2+) is required as a cofactor.

The enzyme catalyses O-phospho-L-seryl-[protein] + H2O = L-seryl-[protein] + phosphate. The catalysed reaction is O-phospho-L-threonyl-[protein] + H2O = L-threonyl-[protein] + phosphate. The chain is Probable protein phosphatase 2C 28 from Arabidopsis thaliana (Mouse-ear cress).